A 193-amino-acid chain; its full sequence is 3-isopropylmalate dehydratase small subunit (193 aa).

Belongs to the LeuD family. LeuD type 1 subfamily. In terms of assembly, heterodimer of LeuC and LeuD.

It catalyses the reaction (2R,3S)-3-isopropylmalate = (2S)-2-isopropylmalate. It functions in the pathway amino-acid biosynthesis; L-leucine biosynthesis; L-leucine from 3-methyl-2-oxobutanoate: step 2/4. Its function is as follows. Catalyzes the isomerization between 2-isopropylmalate and 3-isopropylmalate, via the formation of 2-isopropylmaleate. The polypeptide is 3-isopropylmalate dehydratase small subunit (Bacillus cytotoxicus (strain DSM 22905 / CIP 110041 / 391-98 / NVH 391-98)).